A 110-amino-acid chain; its full sequence is Parvalbumin alpha (110 aa).

Ser2 carries the N-acetylserine modification. A phosphoserine mark is found at Ser2 and Ser24. EF-hand domains follow at residues 39 to 74 (KSPE…FSPD) and 78 to 110 (LSVK…VAES). Residues Asp52, Asp54, Ser56, Phe58, Glu60, Glu63, Asp91, Asp93, Asp95, Lys97, and Glu102 each coordinate Ca(2+).

This sequence belongs to the parvalbumin family.

Functionally, in muscle, parvalbumin is thought to be involved in relaxation after contraction. It binds two calcium ions. The protein is Parvalbumin alpha (PVALB) of Bos taurus (Bovine).